Here is a 113-residue protein sequence, read N- to C-terminus: Nucleoid-associated protein CLH_3225 (113 aa).

Over residues 1 to 14 (MAKGGFPGGFGGGN) the composition is skewed to gly residues. The interval 1–31 (MAKGGFPGGFGGGNMNNLMKQAQKLQKQMED) is disordered.

This sequence belongs to the YbaB/EbfC family. In terms of assembly, homodimer.

Its subcellular location is the cytoplasm. It is found in the nucleoid. Binds to DNA and alters its conformation. May be involved in regulation of gene expression, nucleoid organization and DNA protection. This chain is Nucleoid-associated protein CLH_3225, found in Clostridium botulinum (strain Alaska E43 / Type E3).